We begin with the raw amino-acid sequence, 261 residues long: tRNA pseudouridine synthase A 2 (261 aa).

Residue aspartate 59 is the Nucleophile of the active site. A substrate-binding site is contributed by tyrosine 117.

The protein belongs to the tRNA pseudouridine synthase TruA family. As to quaternary structure, homodimer.

It catalyses the reaction uridine(38/39/40) in tRNA = pseudouridine(38/39/40) in tRNA. Functionally, formation of pseudouridine at positions 38, 39 and 40 in the anticodon stem and loop of transfer RNAs. In Desulfotalea psychrophila (strain LSv54 / DSM 12343), this protein is tRNA pseudouridine synthase A 2.